We begin with the raw amino-acid sequence, 416 residues long: MNSPADYDPKPRRASVAVDVGGVIVGGGAPVVVQSMTNTDTADIDATVRQVAALFQAGSEMVRITVDRDESAAAVPKIRERLLRLGMDVPLIGDFHYIGHKLLADHPACAEALAKYRINPGNVGFKDKKDKQFGEIVEMAIRYDKPVRIGVNWGSLDQELLTTLMDRNKEQGFPLSARQVTREAIVQSALISAELAEEIGLPRNRIILSAKVSQVQDLIAVYSMLSERSNHALHLGLTEAGMGSKGIVASSAAMGYVLQHGIGDTIRVSLTPEPNGDRTREVQVAQELLQVMGFRQFIPVVAACPGCGRTTSTVFQELAQNIQNDIRKNMPIWREKYPGVEALNVAVMGCIVNGPGESKHADIGISLPGTGESPAAPVFIDGEKALTLRGPNIAADFEALVIDYIEKRFGQKDAAE.

4 residues coordinate [4Fe-4S] cluster: Cys-304, Cys-307, Cys-350, and Glu-357.

Belongs to the IspG family. It depends on [4Fe-4S] cluster as a cofactor.

It carries out the reaction (2E)-4-hydroxy-3-methylbut-2-enyl diphosphate + oxidized [flavodoxin] + H2O + 2 H(+) = 2-C-methyl-D-erythritol 2,4-cyclic diphosphate + reduced [flavodoxin]. It participates in isoprenoid biosynthesis; isopentenyl diphosphate biosynthesis via DXP pathway; isopentenyl diphosphate from 1-deoxy-D-xylulose 5-phosphate: step 5/6. In terms of biological role, converts 2C-methyl-D-erythritol 2,4-cyclodiphosphate (ME-2,4cPP) into 1-hydroxy-2-methyl-2-(E)-butenyl 4-diphosphate. This chain is 4-hydroxy-3-methylbut-2-en-1-yl diphosphate synthase (flavodoxin), found in Agrobacterium fabrum (strain C58 / ATCC 33970) (Agrobacterium tumefaciens (strain C58)).